The primary structure comprises 664 residues: Intraflagellar transport protein 70B (664 aa).

TPR repeat units follow at residues 11-44, 45-78, 153-186, 188-220, 385-418, 423-456, and 458-491; these read DGEF…SSRS, RAGL…HPEL, YDGQ…SGYQ, DLSY…GIRQ, LTEQ…YDET, IPVL…CNDH, and VWKL…NYDN. The stretch at 507–534 forms a coiled coil; the sequence is YIMTSQNEEAEELMRKIEKEEEQLSYGD. A TPR 8 repeat occupies 543 to 576; it reads CIVNLVIGTLYCAKGNYDFGISRVIKSLEPYHKK.

This sequence belongs to the TTC30/dfy-1/fleer family. As to quaternary structure, interacts with the IFT B complex components IFT27, IFT46, IFT74, IFT52, IFT57, IFT80, IFT81 and IFT88. Interacts with KIF17.

It localises to the cell projection. Its subcellular location is the cilium. Its function is as follows. Required for polyglutamylation of axonemal tubulin. Plays a role in anterograde intraflagellar transport (IFT), the process by which cilia precursors are transported from the base of the cilium to the site of their incorporation at the tip. The polypeptide is Intraflagellar transport protein 70B (Ift70b) (Mus musculus (Mouse)).